A 254-amino-acid chain; its full sequence is 3-deoxy-manno-octulosonate cytidylyltransferase (254 aa).

The protein belongs to the KdsB family.

The protein localises to the cytoplasm. It catalyses the reaction 3-deoxy-alpha-D-manno-oct-2-ulosonate + CTP = CMP-3-deoxy-beta-D-manno-octulosonate + diphosphate. It functions in the pathway nucleotide-sugar biosynthesis; CMP-3-deoxy-D-manno-octulosonate biosynthesis; CMP-3-deoxy-D-manno-octulosonate from 3-deoxy-D-manno-octulosonate and CTP: step 1/1. The protein operates within bacterial outer membrane biogenesis; lipopolysaccharide biosynthesis. Functionally, activates KDO (a required 8-carbon sugar) for incorporation into bacterial lipopolysaccharide in Gram-negative bacteria. The polypeptide is 3-deoxy-manno-octulosonate cytidylyltransferase (Porphyromonas gingivalis (strain ATCC BAA-308 / W83)).